The following is a 348-amino-acid chain: Ketol-acid reductoisomerase (NADP(+)) (348 aa).

One can recognise a KARI N-terminal Rossmann domain in the interval 2–182 (AKTYYDHDAD…GCTRAGVLET (181 aa)). NADP(+)-binding positions include 25–28 (YGSQ), Ser51, Ser53, and 83–86 (DTAQ). Residue His108 is part of the active site. Gly134 provides a ligand contact to NADP(+). The KARI C-terminal knotted domain maps to 183-328 (TFKEETETDL…EKLRAAMPFL (146 aa)). Asp191, Glu195, Glu227, and Glu231 together coordinate Mg(2+). Ser252 contributes to the substrate binding site.

This sequence belongs to the ketol-acid reductoisomerase family. It depends on Mg(2+) as a cofactor.

The enzyme catalyses (2R)-2,3-dihydroxy-3-methylbutanoate + NADP(+) = (2S)-2-acetolactate + NADPH + H(+). It catalyses the reaction (2R,3R)-2,3-dihydroxy-3-methylpentanoate + NADP(+) = (S)-2-ethyl-2-hydroxy-3-oxobutanoate + NADPH + H(+). Its pathway is amino-acid biosynthesis; L-isoleucine biosynthesis; L-isoleucine from 2-oxobutanoate: step 2/4. It participates in amino-acid biosynthesis; L-valine biosynthesis; L-valine from pyruvate: step 2/4. In terms of biological role, involved in the biosynthesis of branched-chain amino acids (BCAA). Catalyzes an alkyl-migration followed by a ketol-acid reduction of (S)-2-acetolactate (S2AL) to yield (R)-2,3-dihydroxy-isovalerate. In the isomerase reaction, S2AL is rearranged via a Mg-dependent methyl migration to produce 3-hydroxy-3-methyl-2-ketobutyrate (HMKB). In the reductase reaction, this 2-ketoacid undergoes a metal-dependent reduction by NADPH to yield (R)-2,3-dihydroxy-isovalerate. This is Ketol-acid reductoisomerase (NADP(+)) from Acidobacterium capsulatum (strain ATCC 51196 / DSM 11244 / BCRC 80197 / JCM 7670 / NBRC 15755 / NCIMB 13165 / 161).